The chain runs to 188 residues: Putative manganese efflux pump MntP (188 aa).

6 helical membrane passes run 3–23 (WLTILGISVALAMDAFAVALA), 39–59 (LGFHFGLFQALMPIGGWLLGM), 65–85 (ISAYDHWIAFGLLAYVGGRMV), 104–124 (GMTMVMLSVATSIDAFAVGLS), 125–145 (IAMLGVSVWLPATVIGLVAGV), and 167–187 (ICGGLVLCLIGLKILLEHTLL).

Belongs to the MntP (TC 9.B.29) family.

It is found in the cell inner membrane. Its function is as follows. Probably functions as a manganese efflux pump. The polypeptide is Putative manganese efflux pump MntP (Citrifermentans bemidjiense (strain ATCC BAA-1014 / DSM 16622 / JCM 12645 / Bem) (Geobacter bemidjiensis)).